Here is a 196-residue protein sequence, read N- to C-terminus: Peptidyl-tRNA hydrolase (196 aa).

Tyr-17 is a tRNA binding site. The active-site Proton acceptor is the His-22. 3 residues coordinate tRNA: Phe-68, Asn-70, and Asn-116.

This sequence belongs to the PTH family. As to quaternary structure, monomer.

The protein localises to the cytoplasm. It catalyses the reaction an N-acyl-L-alpha-aminoacyl-tRNA + H2O = an N-acyl-L-amino acid + a tRNA + H(+). Functionally, hydrolyzes ribosome-free peptidyl-tRNAs (with 1 or more amino acids incorporated), which drop off the ribosome during protein synthesis, or as a result of ribosome stalling. Its function is as follows. Catalyzes the release of premature peptidyl moieties from peptidyl-tRNA molecules trapped in stalled 50S ribosomal subunits, and thus maintains levels of free tRNAs and 50S ribosomes. This chain is Peptidyl-tRNA hydrolase, found in Yersinia pseudotuberculosis serotype O:1b (strain IP 31758).